A 112-amino-acid chain; its full sequence is Macrodomain Ori protein (112 aa).

Residues 91–112 form a disordered region; sequence FHTLSGGKPQVEGAEDYTDSDD. A compositionally biased stretch (acidic residues) spans 103–112; sequence GAEDYTDSDD.

The protein belongs to the MaoP family.

Its function is as follows. Involved in the organization of the Ori region of the chromosome into a macrodomain (MD). It constrains DNA mobility in the Ori macrodomain and limits long-distance DNA interactions with other chromosomal regions. In Escherichia coli O157:H7, this protein is Macrodomain Ori protein.